Reading from the N-terminus, the 344-residue chain is Mitochondrial mRNA pseudouridine synthase Rpusd3 (344 aa).

The transit peptide at 1–36 (MGALRVLRYVSMIWRPELGSCARQRDAGFGTEARRP) directs the protein to the mitochondrion. Residues 25–53 (RDAGFGTEARRPSQPHRSSKHKDLVEDQP) are disordered.

The protein belongs to the pseudouridine synthase RluA family. Forms a regulatory protein-RNA complex, consisting of RCC1L, NGRN, RPUSD3, RPUSD4, TRUB2, FASTKD2 and 16S mt-rRNA.

It is found in the mitochondrion matrix. The catalysed reaction is a uridine in mRNA = a pseudouridine in mRNA. Catalyzes uridine to pseudouridine isomerization (pseudouridylation) of specific mitochondrial mRNAs (mt-mRNAs), a post-transcriptional modification necessary for their translation. Acts at position 390 in COXI mt-mRNA and at position 697-699 in mitochondrial COXIII mt-mRNA. As a component of a functional protein-RNA module, consisting of RCC1L, NGRN, RPUSD3, RPUSD4, TRUB2, FASTKD2 and 16S mitochondrial ribosomal RNA (16S mt-rRNA), controls 16S mt-rRNA abundance and may play a role in mitochondrial ribosome biogenesis. The chain is Mitochondrial mRNA pseudouridine synthase Rpusd3 (Rpusd3) from Mus musculus (Mouse).